The primary structure comprises 33 residues: U13-ctenitoxin-Pn1c (33 aa).

3 disulfide bridges follow: Cys3/Cys17, Cys10/Cys21, and Cys16/Cys30.

As to expression, expressed by the venom gland.

It localises to the secreted. Its function is as follows. Acts as a neurotoxin. This is U13-ctenitoxin-Pn1c from Phoneutria nigriventer (Brazilian armed spider).